Here is a 414-residue protein sequence, read N- to C-terminus: NADH-quinone oxidoreductase subunit D (414 aa).

This sequence belongs to the complex I 49 kDa subunit family. As to quaternary structure, NDH-1 is composed of 14 different subunits. Subunits NuoB, C, D, E, F, and G constitute the peripheral sector of the complex.

The protein resides in the cell inner membrane. It catalyses the reaction a quinone + NADH + 5 H(+)(in) = a quinol + NAD(+) + 4 H(+)(out). NDH-1 shuttles electrons from NADH, via FMN and iron-sulfur (Fe-S) centers, to quinones in the respiratory chain. The immediate electron acceptor for the enzyme in this species is believed to be ubiquinone. Couples the redox reaction to proton translocation (for every two electrons transferred, four hydrogen ions are translocated across the cytoplasmic membrane), and thus conserves the redox energy in a proton gradient. The chain is NADH-quinone oxidoreductase subunit D from Akkermansia muciniphila (strain ATCC BAA-835 / DSM 22959 / JCM 33894 / BCRC 81048 / CCUG 64013 / CIP 107961 / Muc).